A 141-amino-acid polypeptide reads, in one-letter code: Putative pre-16S rRNA nuclease (141 aa).

This sequence belongs to the YqgF nuclease family.

The protein resides in the cytoplasm. Functionally, could be a nuclease involved in processing of the 5'-end of pre-16S rRNA. The chain is Putative pre-16S rRNA nuclease from Vibrio parahaemolyticus serotype O3:K6 (strain RIMD 2210633).